Here is a 376-residue protein sequence, read N- to C-terminus: Queuine tRNA-ribosyltransferase (376 aa).

Catalysis depends on aspartate 93, which acts as the Proton acceptor. Residues 93–97 (DSGGF), aspartate 147, glutamine 191, and glycine 218 each bind substrate. The RNA binding stretch occupies residues 249–255 (GVGKPED). The Nucleophile role is filled by aspartate 268. Positions 273-277 (TRNAR) are RNA binding; important for wobble base 34 recognition. Cysteine 306, cysteine 308, cysteine 311, and histidine 337 together coordinate Zn(2+).

It belongs to the queuine tRNA-ribosyltransferase family. As to quaternary structure, homodimer. Within each dimer, one monomer is responsible for RNA recognition and catalysis, while the other monomer binds to the replacement base PreQ1. Zn(2+) serves as cofactor.

The enzyme catalyses 7-aminomethyl-7-carbaguanine + guanosine(34) in tRNA = 7-aminomethyl-7-carbaguanosine(34) in tRNA + guanine. The protein operates within tRNA modification; tRNA-queuosine biosynthesis. Functionally, catalyzes the base-exchange of a guanine (G) residue with the queuine precursor 7-aminomethyl-7-deazaguanine (PreQ1) at position 34 (anticodon wobble position) in tRNAs with GU(N) anticodons (tRNA-Asp, -Asn, -His and -Tyr). Catalysis occurs through a double-displacement mechanism. The nucleophile active site attacks the C1' of nucleotide 34 to detach the guanine base from the RNA, forming a covalent enzyme-RNA intermediate. The proton acceptor active site deprotonates the incoming PreQ1, allowing a nucleophilic attack on the C1' of the ribose to form the product. After dissociation, two additional enzymatic reactions on the tRNA convert PreQ1 to queuine (Q), resulting in the hypermodified nucleoside queuosine (7-(((4,5-cis-dihydroxy-2-cyclopenten-1-yl)amino)methyl)-7-deazaguanosine). In Histophilus somni (strain 129Pt) (Haemophilus somnus), this protein is Queuine tRNA-ribosyltransferase.